Reading from the N-terminus, the 1326-residue chain is F-box/WD repeat-containing protein 7 (1326 aa).

Disordered regions lie at residues 1 to 58, 123 to 187, 318 to 351, 399 to 549, 615 to 642, and 797 to 843; these read MERG…AEVG, DSSS…IEDE, TVSN…ALSR, GSKA…SGCS, RSNP…RNGS, and TPRS…NPPP. Over residues 9–39 the composition is skewed to polar residues; it reads SSESVTSAGERTQSAVTSSTSTWVKSQASTS. The span at 165-187 shows a compositional bias: acidic residues; that stretch reads NDDDDDEEPEPEEDDEEELIEDE. Low complexity predominate over residues 320 to 348; it reads SNPSPAASANAAAPEEASTSNSSSTSSSA. Polar residues predominate over residues 403–464; sequence ANGSGTANSD…KLNLGSSLGA (62 aa). A compositionally biased stretch (low complexity) spans 465-486; that stretch reads SSCSQHRSGSSSTSKSMESSTS. Polar residues predominate over residues 495-504; it reads VYTNTNSNDY. 3 stretches are compositionally biased toward low complexity: residues 510–520, 528–546, and 616–631; these read TTSGSSTSGGS, NVSA…SQES, and SNPP…GANP. 2 stretches are compositionally biased toward polar residues: residues 632–642 and 797–824; these read TASVRQRRNGS and TPRS…STPG. At Thr813 the chain carries Phosphothreonine. Residue Ser825 is modified to Phosphoserine. An F-box domain is found at 889 to 935; the sequence is RDFISLLPRELALFVLSYLEPKDLLRAAQTCRSWRFLCDDNLLWKEK. WD repeat units lie at residues 992-1030, 1033-1070, 1073-1110, 1113-1150, 1153-1190, 1193-1232, and 1236-1273; these read GHDD…CLRT, GHTG…CVHT, GHTS…CLHV, GHLA…CLHT, GHTN…CKHT, GHQS…QTLS, and KHHS…FIRN.

In terms of assembly, part of a SCF E3 ubiquitin-protein ligase complex. Interacts with Myc and puf. Interacts with CycE. In terms of tissue distribution, expressed in follicle cell epithelium and imaginal disks, particularly in the morphogenetic furrow.

Its subcellular location is the nucleus. Its pathway is protein modification; protein ubiquitination. Its function is as follows. Substrate recognition component of a SCF (SKP1-CUL1-F-box protein) E3 ubiquitin-protein ligase complex which mediates the ubiquitination and subsequent proteasomal degradation of target proteins. Probably recognizes and binds to phosphorylated target proteins. In the wing and eye, negatively regulates cell growth and proliferation by mediating the degradation of Myc and cyclin E, respectively. Required for endocycles, but not mitosis in follicle cell epithelium. This chain is F-box/WD repeat-containing protein 7, found in Drosophila melanogaster (Fruit fly).